We begin with the raw amino-acid sequence, 342 residues long: S-adenosylmethionine:tRNA ribosyltransferase-isomerase (342 aa).

This sequence belongs to the QueA family. As to quaternary structure, monomer.

It localises to the cytoplasm. It carries out the reaction 7-aminomethyl-7-carbaguanosine(34) in tRNA + S-adenosyl-L-methionine = epoxyqueuosine(34) in tRNA + adenine + L-methionine + 2 H(+). The protein operates within tRNA modification; tRNA-queuosine biosynthesis. In terms of biological role, transfers and isomerizes the ribose moiety from AdoMet to the 7-aminomethyl group of 7-deazaguanine (preQ1-tRNA) to give epoxyqueuosine (oQ-tRNA). The sequence is that of S-adenosylmethionine:tRNA ribosyltransferase-isomerase from Streptococcus pyogenes serotype M2 (strain MGAS10270).